The following is a 246-amino-acid chain: MDKNLNQLLKWSIEAQTAANAGQSYHSNGAPTPNNNSGPATGTGAVATSPAPQVTGSGPRPVDPEVLASLFGGPSEAELMKAAMEVITDPSPETTRENKLIAFDNFEQLIENLDNANLLEELSLWSPLISLLDHEDEDMRYHAAWCLGTAVQNNQKTQERLLAMGGVPKLVDLAMKEGESEKVRRKATYALSSAVRNYQPAMDVAADEMHKRGHEVLVNNGTKVDAADMDKVDEVIDVLRNKAKSA.

Residues 23 to 40 (QSYHSNGAPTPNNNSGPA) show a composition bias toward polar residues. Residues 23–63 (QSYHSNGAPTPNNNSGPATGTGAVATSPAPQVTGSGPRPVD) form a disordered region. ARM repeat units lie at residues 48-92 (TSPA…DPSP), 113-152 (LDNA…TAVQ), 155-196 (QKTQ…SAVR), and 214-244 (HEVL…NKAK).

This sequence belongs to the FES1 family.

It is found in the cytoplasm. In terms of biological role, functions as a nucleotide exchange factor (NEF) for Hsp70 chaperones which accelerates the release of ADP. Required for fully efficient Hsp70-mediated folding of proteins. This Neurospora crassa (strain ATCC 24698 / 74-OR23-1A / CBS 708.71 / DSM 1257 / FGSC 987) protein is Hsp70 nucleotide exchange factor fes-1 (fes-1).